Consider the following 631-residue polypeptide: Probable potassium transport system protein Kup (631 aa).

12 consecutive transmembrane segments (helical) span residues 17 to 37 (IGLL…SPLY), 56 to 76 (ILGV…FKYM), 109 to 129 (MMMV…SMIT), 147 to 167 (GLDH…FLIQ), 174 to 194 (IGVL…ALGV), 215 to 235 (FFII…LALT), 256 to 276 (WFIL…ALVL), 288 to 308 (LLAP…ATII), 346 to 366 (IYIG…VIGF), 378 to 398 (VAVT…MLML), 403 to 423 (PLLA…FFAA), and 428 to 448 (IFQG…LMTT).

The protein belongs to the HAK/KUP transporter (TC 2.A.72) family.

Its subcellular location is the cell inner membrane. The enzyme catalyses K(+)(in) + H(+)(in) = K(+)(out) + H(+)(out). In terms of biological role, transport of potassium into the cell. Likely operates as a K(+):H(+) symporter. This is Probable potassium transport system protein Kup from Pseudomonas syringae pv. tomato (strain ATCC BAA-871 / DC3000).